We begin with the raw amino-acid sequence, 478 residues long: Putrescine oxidase (478 aa).

15–70 (RDVVVVGAGPAGLMAARTLVAAGRTVAVLEARDRVGGRTWSKTVDGAFLEIGGQWI) is a binding site for FAD.

It belongs to the flavin monoamine oxidase family. The cofactor is FAD.

The catalysed reaction is putrescine + O2 + H2O = 4-aminobutanal + H2O2 + NH4(+). The sequence is that of Putrescine oxidase (puo) from Kocuria rosea (Deinococcus erythromyxa).